The sequence spans 122 residues: Small ribosomal subunit protein uS13 (122 aa).

A disordered region spans residues 95-122 (GLPVRGQRTKTNARTRKGPKKTIAGKKK).

The protein belongs to the universal ribosomal protein uS13 family. In terms of assembly, part of the 30S ribosomal subunit. Forms a loose heterodimer with protein S19. Forms two bridges to the 50S subunit in the 70S ribosome.

Its function is as follows. Located at the top of the head of the 30S subunit, it contacts several helices of the 16S rRNA. In the 70S ribosome it contacts the 23S rRNA (bridge B1a) and protein L5 of the 50S subunit (bridge B1b), connecting the 2 subunits; these bridges are implicated in subunit movement. Contacts the tRNAs in the A and P-sites. The chain is Small ribosomal subunit protein uS13 from Corynebacterium aurimucosum (strain ATCC 700975 / DSM 44827 / CIP 107346 / CN-1) (Corynebacterium nigricans).